Here is a 240-residue protein sequence, read N- to C-terminus: uncharacterized protein (240 aa).

An N-terminal signal peptide occupies residues 1 to 18 (MTRYTYLFILQIISCSFA). Asn-127 is a glycosylation site (N-linked (GlcNAc...) asparagine). The chain crosses the membrane as a helical span at residues 215 to 235 (GFISSSQLPQFVYLIVFTIIG).

The protein resides in the membrane. This is an uncharacterized protein from Caenorhabditis elegans.